The following is a 439-amino-acid chain: Glutamyl-tRNA reductase (439 aa).

Residues 48-51, S107, 112-114, and Q118 each bind substrate; these read TCNR and EPQ. The active-site Nucleophile is C49. 187 to 192 provides a ligand contact to NADP(+); the sequence is GAGEMA.

This sequence belongs to the glutamyl-tRNA reductase family. Homodimer.

It catalyses the reaction (S)-4-amino-5-oxopentanoate + tRNA(Glu) + NADP(+) = L-glutamyl-tRNA(Glu) + NADPH + H(+). The protein operates within porphyrin-containing compound metabolism; protoporphyrin-IX biosynthesis; 5-aminolevulinate from L-glutamyl-tRNA(Glu): step 1/2. In terms of biological role, catalyzes the NADPH-dependent reduction of glutamyl-tRNA(Glu) to glutamate 1-semialdehyde (GSA). The sequence is that of Glutamyl-tRNA reductase from Maridesulfovibrio salexigens (strain ATCC 14822 / DSM 2638 / NCIMB 8403 / VKM B-1763) (Desulfovibrio salexigens).